A 702-amino-acid polypeptide reads, in one-letter code: Exodeoxyribonuclease 1 (702 aa).

The segment at 1 to 96 (MGIQGLLPQL…STESKRRDKR (96 aa)) is N-domain. Asp30, Asp78, Glu150, Asp152, Asp171, Asp173, and Asp227 together coordinate Mg(2+). The I-domain stretch occupies residues 114–247 (NAMDYFQKCV…ITAMKLVRRF (134 aa)). Ser372 bears the Phosphoserine mark. 2 disordered regions span residues 465–571 (SIQD…SQRS) and 660–685 (SFNS…SQAR). The segment covering 474–498 (NSQSLEEPVSESQLSTQIPSSFITT) has biased composition (polar residues). Acidic residues-rich tracts occupy residues 500–518 (LEDD…SDIE) and 535–550 (NTDD…DYSE). Residues 558–571 (TSSTTSFPGSSQRS) are compositionally biased toward low complexity. Over residues 667–678 (LHEESKKRDIET) the composition is skewed to basic and acidic residues.

This sequence belongs to the XPG/RAD2 endonuclease family. EXO1 subfamily. In terms of assembly, interacts with mismatch repair protein MSH2. The cofactor is Mg(2+).

The protein localises to the nucleus. With respect to regulation, inactivated by calcium and zinc ions. In terms of biological role, 5'-&gt;3' double-stranded DNA exonuclease involved in mismatch repair and eventually also in mitotic recombination between direct repeats. Also has a minor role in the correction of large DNA mismatches that occur in the heteroduplex DNA during meiotic recombination at the HIS4 locus. This Saccharomyces cerevisiae (strain ATCC 204508 / S288c) (Baker's yeast) protein is Exodeoxyribonuclease 1 (EXO1).